Consider the following 291-residue polypeptide: Potassium-transporting ATPase subunit beta (291 aa).

Over M1–R36 the chain is Cytoplasmic. Residues W37–L57 traverse the membrane as a helical; Signal-anchor for type II membrane protein segment. Residues C58–K291 are Extracellular-facing. N99, N103, N130, N146, and N161 each carry an N-linked (GlcNAc...) asparagine glycan. Residues C131 and C152 are joined by a disulfide bond. A disulfide bridge connects residues C162 and C178. N-linked (GlcNAc...) asparagine glycosylation is found at N193 and N222. The segment at S194–K291 is immunoglobulin-like. C201 and C263 are disulfide-bonded.

Belongs to the X(+)/potassium ATPases subunit beta family. In terms of assembly, the ATPase pump is composed of two subunits: alpha (catalytic) and beta (regulatory). Interacts with alpha subunit ATP12A; this interaction is required for the formation of a functionally active pump and targeting at the plasma membrane. Interacts (via N-terminus) with alpha subunit ATP4A (via the P-domain). In terms of processing, N-glycosylation is necessary for assembly and functional expression of the pump at the plasma membrane.

It localises to the apical cell membrane. The protein resides in the cell membrane. Functionally, the beta subunit of the gastric H(+)/K(+) ATPase pump which transports H(+) ions in exchange for K(+) ions across the apical membrane of parietal cells. Plays a structural and regulatory role in the assembly and membrane targeting of a functionally active pump. Within a transport cycle, the transfer of a H(+) ion across the membrane is coupled to ATP hydrolysis and is associated with a transient phosphorylation of the alpha subunit that shifts the pump conformation from inward-facing (E1) to outward-facing state (E2). Interacts with the phosphorylation domain of the alpha subunit and functions as a ratchet, stabilizing the lumenal-open E2 conformation and preventing the reverse reaction of the transport cycle. This Oryctolagus cuniculus (Rabbit) protein is Potassium-transporting ATPase subunit beta (ATP4B).